We begin with the raw amino-acid sequence, 448 residues long: Inositol hexakisphosphate kinase 2 (448 aa).

ATP-binding positions include 229-231 and Asp242; that span reads ENL. Substrate-binding positions include 238–246, Lys244, and 258–265; these read PCVLDLKMG and KAANQIRK. An ATP-binding site is contributed by Asp405. His408 serves as a coordination point for substrate.

This sequence belongs to the inositol phosphokinase (IPK) family. As to expression, highly expressed in brain and lung, and at slightly lower levels in liver, kidney and testis.

It localises to the nucleus. It carries out the reaction 1D-myo-inositol hexakisphosphate + ATP = 5-diphospho-1D-myo-inositol 1,2,3,4,6-pentakisphosphate + ADP. It functions in the pathway phospholipid metabolism; phosphatidylinositol metabolism. In terms of biological role, converts inositol hexakisphosphate (InsP6) to diphosphoinositol pentakisphosphate (InsP7/PP-InsP5). May play a role in the regulation of Na(+)-dependent phosphate cotransport, possibly via its role in diphosphoinositol pentakisphosphate (InsP7/PP-InsP5) biosynthesis. The sequence is that of Inositol hexakisphosphate kinase 2 (Ip6k2) from Mus musculus (Mouse).